The primary structure comprises 265 residues: Undecaprenyl-diphosphatase (265 aa).

7 consecutive transmembrane segments (helical) span residues 42–62 (ATTF…VLYW), 82–102 (GIML…AAHS), 108–128 (LFTP…MLLV), 143–163 (MSPA…WPGF), 181–201 (GLAA…ATGY), 221–241 (GFVV…ALVG), and 248–264 (FAWY…YFMA).

This sequence belongs to the UppP family.

It localises to the cell inner membrane. It catalyses the reaction di-trans,octa-cis-undecaprenyl diphosphate + H2O = di-trans,octa-cis-undecaprenyl phosphate + phosphate + H(+). In terms of biological role, catalyzes the dephosphorylation of undecaprenyl diphosphate (UPP). Confers resistance to bacitracin. The polypeptide is Undecaprenyl-diphosphatase (Nitratidesulfovibrio vulgaris (strain ATCC 29579 / DSM 644 / CCUG 34227 / NCIMB 8303 / VKM B-1760 / Hildenborough) (Desulfovibrio vulgaris)).